Consider the following 673-residue polypeptide: Vasorin (673 aa).

The signal sequence occupies residues 1 to 24; the sequence is MHSRSCLPPLLLLLLVLLGSGVQG. The LRRNT domain maps to 25–53; it reads CPSGCQCNQPQTVFCTARQGTTVPRDVPP. Topologically, residues 25–576 are extracellular; sequence CPSGCQCNQP…VTQAREGNLP (552 aa). LRR repeat units follow at residues 54-75, 78-99, 102-123, 126-147, 150-170, 171-192, 194-215, 218-239, 241-265, and 266-288; these read DTVGLYIFENGITTLDVGCFAG, GLQLLDLSQNQITSLPGGIFQP, NLSNLDLTANKLHEISNETFRG, RLERLYLGKNRIRHIQPGAFDA, RLLELKLPDNELRVLPPLHLP, RLLLLDLSHNSIPALEAGILDT, NVEALRLAGLGLRQLDEGLFGR, NLHDLDVSDNQLEHMPSVIQGL, GLTRLRLAGNTRIAQIRPEDLAGLT, and ALQELDVSNLSLQALPSDLSSLF. N-linked (GlcNAc...) asparagine glycans are attached at residues Asn-102 and Asn-118. A glycan (N-linked (GlcNAc...) asparagine) is linked at Asn-274. The region spanning 299–352 is the LRRCT domain; it reads NPFNCLCPLSWFGPWVRENHVVLASPEETRCHFPPKNAGRLLLDLDYADFGCPV. The interval 369–389 is disordered; sequence PTLSTSSQAPTWPSLTEPTTQ. Over residues 370–389 the composition is skewed to polar residues; it reads TLSTSSQAPTWPSLTEPTTQ. An EGF-like domain is found at 406-443; sequence QPQDCPASICLNGGSCRLGARHHWECLCPEGFIGLYCE. 3 cysteine pairs are disulfide-bonded: Cys-410-Cys-421, Cys-415-Cys-431, and Cys-433-Cys-442. A Fibronectin type-III domain is found at 463 to 559; sequence PLLPLSIEPV…ACGEANTSQA (97 aa). 3 N-linked (GlcNAc...) asparagine glycosylation sites follow: Asn-501, Asn-529, and Asn-555. A helical membrane pass occupies residues 577–597; that stretch reads LLIAPALAAVLLAVLAAAGAA. Topologically, residues 598 to 673 are cytoplasmic; the sequence is YCVRRARATS…QGVLPAKHYI (76 aa). Residues 608–648 are disordered; it reads TAQDKGQVGPGTGPLELEGVKAPLEPGSKATEGGGEALSGG.

In terms of assembly, interacts with TGFB1, TGFB2 and TGFB3. Post-translationally, N-glycosylated.

It is found in the membrane. Functionally, may act as an inhibitor of TGF-beta signaling. In Mus musculus (Mouse), this protein is Vasorin (Vasn).